The chain runs to 87 residues: UPF0250 protein YE3006 (87 aa).

The protein belongs to the UPF0250 family.

The polypeptide is UPF0250 protein YE3006 (Yersinia enterocolitica serotype O:8 / biotype 1B (strain NCTC 13174 / 8081)).